The chain runs to 571 residues: Proline--tRNA ligase (571 aa).

Belongs to the class-II aminoacyl-tRNA synthetase family. ProS type 1 subfamily. Homodimer.

It is found in the cytoplasm. The enzyme catalyses tRNA(Pro) + L-proline + ATP = L-prolyl-tRNA(Pro) + AMP + diphosphate. Catalyzes the attachment of proline to tRNA(Pro) in a two-step reaction: proline is first activated by ATP to form Pro-AMP and then transferred to the acceptor end of tRNA(Pro). As ProRS can inadvertently accommodate and process non-cognate amino acids such as alanine and cysteine, to avoid such errors it has two additional distinct editing activities against alanine. One activity is designated as 'pretransfer' editing and involves the tRNA(Pro)-independent hydrolysis of activated Ala-AMP. The other activity is designated 'posttransfer' editing and involves deacylation of mischarged Ala-tRNA(Pro). The misacylated Cys-tRNA(Pro) is not edited by ProRS. This is Proline--tRNA ligase from Shewanella baltica (strain OS155 / ATCC BAA-1091).